Consider the following 103-residue polypeptide: NADH-ubiquinone oxidoreductase chain 4L (103 aa).

A run of 3 helical transmembrane segments spans residues 6-26, 31-51, and 65-85; these read IFFL…GIFI, IIII…NFAI, and ILYT…ILII.

This sequence belongs to the complex I subunit 4L family.

It localises to the mitochondrion membrane. The enzyme catalyses a ubiquinone + NADH + 5 H(+)(in) = a ubiquinol + NAD(+) + 4 H(+)(out). Functionally, core subunit of the mitochondrial membrane respiratory chain NADH dehydrogenase (Complex I) that is believed to belong to the minimal assembly required for catalysis. Complex I functions in the transfer of electrons from NADH to the respiratory chain. The immediate electron acceptor for the enzyme is believed to be ubiquinone. In Acanthamoeba castellanii (Amoeba), this protein is NADH-ubiquinone oxidoreductase chain 4L (ND4L).